Consider the following 455-residue polypeptide: UPF0053 protein MT1890 (455 aa).

The region spanning Asn-2–Thr-205 is the CNNM transmembrane domain. Helical transmembrane passes span Thr-6 to Ala-26, Leu-68 to Leu-88, Leu-106 to Val-126, and Leu-148 to Val-168. CBS domains follow at residues Met-224–Leu-285 and Leu-286–Glu-346.

Belongs to the UPF0053 family.

It is found in the cell membrane. This Mycobacterium tuberculosis (strain CDC 1551 / Oshkosh) protein is UPF0053 protein MT1890.